The primary structure comprises 467 residues: Glycogen synthase (467 aa).

An ADP-alpha-D-glucose-binding site is contributed by Lys15.

It belongs to the glycosyltransferase 1 family. Bacterial/plant glycogen synthase subfamily.

It catalyses the reaction [(1-&gt;4)-alpha-D-glucosyl](n) + ADP-alpha-D-glucose = [(1-&gt;4)-alpha-D-glucosyl](n+1) + ADP + H(+). It functions in the pathway glycan biosynthesis; glycogen biosynthesis. Functionally, synthesizes alpha-1,4-glucan chains using ADP-glucose. This chain is Glycogen synthase, found in Desulfitobacterium hafniense (strain DSM 10664 / DCB-2).